The chain runs to 212 residues: Stringent starvation protein A (212 aa).

The GST N-terminal domain maps to 9–87 (SVMTLFSGPT…YLDERFPHPP (79 aa)). The GST C-terminal domain maps to 92 to 209 (YPVARGESRL…LTEAEREMRL (118 aa)).

The protein belongs to the GST superfamily. HSP26 family.

Functionally, forms an equimolar complex with the RNA polymerase holoenzyme (RNAP) but not with the core enzyme. The sequence is that of Stringent starvation protein A (sspA) from Escherichia coli O157:H7.